Consider the following 445-residue polypeptide: Tubulin beta-3 chain (445 aa).

Q11, E69, S138, G142, T143, G144, N204, and N226 together coordinate GTP. E69 contacts Mg(2+). A disordered region spans residues 421–445 (EYQQYQDATADEEEEYDEEEEEEAA). Residues 429–445 (TADEEEEYDEEEEEEAA) show a composition bias toward acidic residues.

Belongs to the tubulin family. As to quaternary structure, dimer of alpha and beta chains. A typical microtubule is a hollow water-filled tube with an outer diameter of 25 nm and an inner diameter of 15 nM. Alpha-beta heterodimers associate head-to-tail to form protofilaments running lengthwise along the microtubule wall with the beta-tubulin subunit facing the microtubule plus end conferring a structural polarity. Microtubules usually have 13 protofilaments but different protofilament numbers can be found in some organisms and specialized cells. Mg(2+) is required as a cofactor.

The protein resides in the cytoplasm. The protein localises to the cytoskeleton. Tubulin is the major constituent of microtubules, a cylinder consisting of laterally associated linear protofilaments composed of alpha- and beta-tubulin heterodimers. Microtubules grow by the addition of GTP-tubulin dimers to the microtubule end, where a stabilizing cap forms. Below the cap, tubulin dimers are in GDP-bound state, owing to GTPase activity of alpha-tubulin. The chain is Tubulin beta-3 chain (TUBB3) from Triticum aestivum (Wheat).